The sequence spans 321 residues: Biotin synthase (321 aa).

The 227-residue stretch at 44-270 folds into the Radical SAM core domain; sequence RGVRIHILNN…DAEVRAAGGR (227 aa). 3 residues coordinate [4Fe-4S] cluster: Cys59, Cys63, and Cys66. The [2Fe-2S] cluster site is built by Cys103, Cys135, Cys195, and Arg265.

Belongs to the radical SAM superfamily. Biotin synthase family. As to quaternary structure, homodimer. It depends on [4Fe-4S] cluster as a cofactor. The cofactor is [2Fe-2S] cluster.

The enzyme catalyses (4R,5S)-dethiobiotin + (sulfur carrier)-SH + 2 reduced [2Fe-2S]-[ferredoxin] + 2 S-adenosyl-L-methionine = (sulfur carrier)-H + biotin + 2 5'-deoxyadenosine + 2 L-methionine + 2 oxidized [2Fe-2S]-[ferredoxin]. It functions in the pathway cofactor biosynthesis; biotin biosynthesis; biotin from 7,8-diaminononanoate: step 2/2. Its function is as follows. Catalyzes the conversion of dethiobiotin (DTB) to biotin by the insertion of a sulfur atom into dethiobiotin via a radical-based mechanism. The polypeptide is Biotin synthase (Magnetococcus marinus (strain ATCC BAA-1437 / JCM 17883 / MC-1)).